The following is a 277-amino-acid chain: tRNA pseudouridine synthase A (277 aa).

Aspartate 57 acts as the Nucleophile in catalysis. Tyrosine 115 contacts substrate.

Belongs to the tRNA pseudouridine synthase TruA family. In terms of assembly, homodimer.

It carries out the reaction uridine(38/39/40) in tRNA = pseudouridine(38/39/40) in tRNA. Its function is as follows. Formation of pseudouridine at positions 38, 39 and 40 in the anticodon stem and loop of transfer RNAs. In Nitratidesulfovibrio vulgaris (strain DSM 19637 / Miyazaki F) (Desulfovibrio vulgaris), this protein is tRNA pseudouridine synthase A.